Here is a 340-residue protein sequence, read N- to C-terminus: MKVTHFHFGKDGGAERFFVHLVNALAERGVEQTAIIRPGRGWRRDIEGAAKIRESHFRNLSLDRILLPLKVKHMARREKPDVLMAWAPRASELMPNYKGAFKISRLGDYPTRLSYFRNTDCIVCNTPGIAERVSDLGWKREIRVISNFTGTGRVVAVDRAKLDTPADAPVVMSMGRFVERKGFHTLIEAVARLPGVYLWLLGDGEERDNLHKLATDLGVSGRVRFAGWQDDTRPFLAAVDVFVMSSSHEPLGNVILESWAQGTPVVSTRSEGPQWFMRDGENGLMVDIGDAEGFARAIEQIVADNSLRTRLAERGHETLVGQFSREAITDAYLQLLASKP.

It belongs to the glycosyltransferase group 1 family. Glycosyltransferase 4 subfamily.

It functions in the pathway bacterial outer membrane biogenesis; LPS core biosynthesis. This is Lipopolysaccharide core biosynthesis glycosyltransferase LpsE (lpsE) from Rhizobium meliloti (strain 1021) (Ensifer meliloti).